Here is a 334-residue protein sequence, read N- to C-terminus: MDERLVSSEADNHESVIEQSLRPQNLAQYIGQHKVKENLRVFIDAAKMRQETLDHVLLYGPPGLGKTTLASIVANEMGVELRTTSGPAIERPGDLAAILTALEPGDVLFIDEIHRLHRSIEEVLYPAMEDFCLDIVIGKGPSARSVRLDLPPFTLVGATTRVGLLTAPLRDRFGVMSRLEYYTQEELADIVTRTADVFEVEIDKPSALEIARRSRGTPRVANRLLRRVRDFAQVLGDSRITEDISQNALERLQVDRLGLDHIDHKLLMGMIEKFNGGPVGLDTISATIGEESHTIEDVYEPYLLQIGFIQRTPRGRIVTPAVYHHFQMEAPRYD.

A large ATPase domain (RuvB-L) region spans residues 1–182; the sequence is MDERLVSSEA…FGVMSRLEYY (182 aa). ATP contacts are provided by residues leucine 21, arginine 22, glycine 63, lysine 66, threonine 67, threonine 68, 129–131, arginine 172, tyrosine 182, and arginine 219; that span reads EDF. Residue threonine 67 coordinates Mg(2+). Residues 183-253 form a small ATPAse domain (RuvB-S) region; it reads TQEELADIVT…ISQNALERLQ (71 aa). A head domain (RuvB-H) region spans residues 256 to 334; it reads RLGLDHIDHK…HFQMEAPRYD (79 aa). DNA contacts are provided by arginine 311 and arginine 316.

It belongs to the RuvB family. Homohexamer. Forms an RuvA(8)-RuvB(12)-Holliday junction (HJ) complex. HJ DNA is sandwiched between 2 RuvA tetramers; dsDNA enters through RuvA and exits via RuvB. An RuvB hexamer assembles on each DNA strand where it exits the tetramer. Each RuvB hexamer is contacted by two RuvA subunits (via domain III) on 2 adjacent RuvB subunits; this complex drives branch migration. In the full resolvosome a probable DNA-RuvA(4)-RuvB(12)-RuvC(2) complex forms which resolves the HJ. Homohexamer which interacts with RecU.

It is found in the cytoplasm. It catalyses the reaction ATP + H2O = ADP + phosphate + H(+). Its function is as follows. The RuvA-RuvB-RuvC complex processes Holliday junction (HJ) DNA during genetic recombination and DNA repair, while the RuvA-RuvB complex plays an important role in the rescue of blocked DNA replication forks via replication fork reversal (RFR). RuvA specifically binds to HJ cruciform DNA, conferring on it an open structure. The RuvB hexamer acts as an ATP-dependent pump, pulling dsDNA into and through the RuvAB complex. RuvB forms 2 homohexamers on either side of HJ DNA bound by 1 or 2 RuvA tetramers; 4 subunits per hexamer contact DNA at a time. Coordinated motions by a converter formed by DNA-disengaged RuvB subunits stimulates ATP hydrolysis and nucleotide exchange. Immobilization of the converter enables RuvB to convert the ATP-contained energy into a lever motion, pulling 2 nucleotides of DNA out of the RuvA tetramer per ATP hydrolyzed, thus driving DNA branch migration. The RuvB motors rotate together with the DNA substrate, which together with the progressing nucleotide cycle form the mechanistic basis for DNA recombination by continuous HJ branch migration. Branch migration allows RuvC to scan DNA until it finds its consensus sequence, where it cleaves and resolves cruciform DNA. In Bacillus subtilis (strain 168), this protein is Holliday junction branch migration complex subunit RuvB.